The chain runs to 45 residues: uncharacterized protein (45 aa).

This is an uncharacterized protein from Xylella fastidiosa (strain Temecula1 / ATCC 700964).